The following is a 643-amino-acid chain: Phosphomethylpyrimidine synthase (643 aa).

Substrate-binding positions include Asn248, Met277, Tyr306, His342, 362 to 364 (SRG), 403 to 406 (DGLR), and Glu442. Position 446 (His446) interacts with Zn(2+). A substrate-binding site is contributed by Tyr469. His510 is a Zn(2+) binding site. The [4Fe-4S] cluster site is built by Cys590, Cys593, and Cys598.

It belongs to the ThiC family. As to quaternary structure, homodimer. Requires [4Fe-4S] cluster as cofactor.

It catalyses the reaction 5-amino-1-(5-phospho-beta-D-ribosyl)imidazole + S-adenosyl-L-methionine = 4-amino-2-methyl-5-(phosphooxymethyl)pyrimidine + CO + 5'-deoxyadenosine + formate + L-methionine + 3 H(+). The protein operates within cofactor biosynthesis; thiamine diphosphate biosynthesis. Functionally, catalyzes the synthesis of the hydroxymethylpyrimidine phosphate (HMP-P) moiety of thiamine from aminoimidazole ribotide (AIR) in a radical S-adenosyl-L-methionine (SAM)-dependent reaction. The sequence is that of Phosphomethylpyrimidine synthase from Burkholderia ambifaria (strain ATCC BAA-244 / DSM 16087 / CCUG 44356 / LMG 19182 / AMMD) (Burkholderia cepacia (strain AMMD)).